Here is a 412-residue protein sequence, read N- to C-terminus: [Pyruvate dehydrogenase (acetyl-transferring)] kinase isozyme 4, mitochondrial (412 aa).

The region spanning 138-368 (ILEYKDTCTV…DAIIYLKALS (231 aa)) is the Histidine kinase domain. ATP-binding positions include 254–261 (ELFKNAMR), D293, 312–313 (ST), and 329–334 (GFGYGL).

The protein belongs to the PDK/BCKDK protein kinase family. Homodimer. Interacts with the pyruvate dehydrogenase complex subunit DLAT, and is part of the multimeric pyruvate dehydrogenase complex that contains multiple copies of pyruvate dehydrogenase (E1), dihydrolipoamide acetyltransferase (DLAT, E2) and lipoamide dehydrogenase (DLD, E3). In terms of tissue distribution, detected in skeletal muscle and heart.

The protein resides in the mitochondrion matrix. The enzyme catalyses L-seryl-[pyruvate dehydrogenase E1 alpha subunit] + ATP = O-phospho-L-seryl-[pyruvate dehydrogenase E1 alpha subunit] + ADP + H(+). Its function is as follows. Kinase that plays a key role in regulation of glucose and fatty acid metabolism and homeostasis via phosphorylation of the pyruvate dehydrogenase subunits PDHA1 and PDHA2. This inhibits pyruvate dehydrogenase activity, and thereby regulates metabolite flux through the tricarboxylic acid cycle, down-regulates aerobic respiration and inhibits the formation of acetyl-coenzyme A from pyruvate. Inhibition of pyruvate dehydrogenase decreases glucose utilization and increases fat metabolism in response to prolonged fasting and starvation. Plays an important role in maintaining normal blood glucose levels under starvation, and is involved in the insulin signaling cascade. Via its regulation of pyruvate dehydrogenase activity, plays an important role in maintaining normal blood pH and in preventing the accumulation of ketone bodies under starvation. In the fed state, mediates cellular responses to glucose levels and to a high-fat diet. Regulates both fatty acid oxidation and de novo fatty acid biosynthesis. Plays a role in the generation of reactive oxygen species. Protects detached epithelial cells against anoikis. Plays a role in cell proliferation via its role in regulating carbohydrate and fatty acid metabolism. This is [Pyruvate dehydrogenase (acetyl-transferring)] kinase isozyme 4, mitochondrial (PDK4) from Ictidomys tridecemlineatus (Thirteen-lined ground squirrel).